We begin with the raw amino-acid sequence, 256 residues long: Thiazole synthase (256 aa).

K96 (schiff-base intermediate with DXP) is an active-site residue. 1-deoxy-D-xylulose 5-phosphate contacts are provided by residues G157, 184–185 (AG), and 206–207 (NT).

This sequence belongs to the ThiG family. Homotetramer. Forms heterodimers with either ThiH or ThiS.

Its subcellular location is the cytoplasm. It catalyses the reaction [ThiS sulfur-carrier protein]-C-terminal-Gly-aminoethanethioate + 2-iminoacetate + 1-deoxy-D-xylulose 5-phosphate = [ThiS sulfur-carrier protein]-C-terminal Gly-Gly + 2-[(2R,5Z)-2-carboxy-4-methylthiazol-5(2H)-ylidene]ethyl phosphate + 2 H2O + H(+). It participates in cofactor biosynthesis; thiamine diphosphate biosynthesis. In terms of biological role, catalyzes the rearrangement of 1-deoxy-D-xylulose 5-phosphate (DXP) to produce the thiazole phosphate moiety of thiamine. Sulfur is provided by the thiocarboxylate moiety of the carrier protein ThiS. In vitro, sulfur can be provided by H(2)S. The protein is Thiazole synthase of Roseobacter denitrificans (strain ATCC 33942 / OCh 114) (Erythrobacter sp. (strain OCh 114)).